A 1073-amino-acid chain; its full sequence is Carbamoyl phosphate synthase large chain (1073 aa).

Positions 1–402 (MPRRIDVRKV…ALQKAIRMLD (402 aa)) are carboxyphosphate synthetic domain. Residues Arg129, Arg169, Gly175, Gly176, Lys208, Leu210, Glu215, Gly241, Val242, His243, Gln284, and Glu299 each coordinate ATP. The 196-residue stretch at 133 to 328 (RETMMKAGLP…LAYIAAKLAL (196 aa)) folds into the ATP-grasp 1 domain. Residues Gln284, Glu299, and Asn301 each coordinate Mg(2+). Mn(2+) is bound by residues Gln284, Glu299, and Asn301. The segment at 403–555 (IGEPGVVAGP…MSYNAYEDDE (153 aa)) is oligomerization domain. The segment at 556–944 (PITTGRPRLI…LKSWLSVQGN (389 aa)) is carbamoyl phosphate synthetic domain. Residues 681 to 871 (SQLLEELGIK…LMRAAAEAAL (191 aa)) enclose the ATP-grasp 2 domain. ATP is bound by residues Arg717, Lys756, Leu758, Glu763, Gly787, Val788, His789, Ser790, Gln830, and Glu842. The Mg(2+) site is built by Gln830, Glu842, and Asn844. Mn(2+) contacts are provided by Gln830, Glu842, and Asn844. One can recognise an MGS-like domain in the interval 944–1073 (NRIPPAGSIV…EYWGPNVEPF (130 aa)). The tract at residues 945-1073 (RIPPAGSIVL…EYWGPNVEPF (129 aa)) is allosteric domain.

It belongs to the CarB family. As to quaternary structure, composed of two chains; the small (or glutamine) chain promotes the hydrolysis of glutamine to ammonia, which is used by the large (or ammonia) chain to synthesize carbamoyl phosphate. Tetramer of heterodimers (alpha,beta)4. The cofactor is Mg(2+). Mn(2+) is required as a cofactor.

The catalysed reaction is hydrogencarbonate + L-glutamine + 2 ATP + H2O = carbamoyl phosphate + L-glutamate + 2 ADP + phosphate + 2 H(+). It carries out the reaction hydrogencarbonate + NH4(+) + 2 ATP = carbamoyl phosphate + 2 ADP + phosphate + 2 H(+). Its pathway is amino-acid biosynthesis; L-arginine biosynthesis; carbamoyl phosphate from bicarbonate: step 1/1. It participates in pyrimidine metabolism; UMP biosynthesis via de novo pathway; (S)-dihydroorotate from bicarbonate: step 1/3. Large subunit of the glutamine-dependent carbamoyl phosphate synthetase (CPSase). CPSase catalyzes the formation of carbamoyl phosphate from the ammonia moiety of glutamine, carbonate, and phosphate donated by ATP, constituting the first step of 2 biosynthetic pathways, one leading to arginine and/or urea and the other to pyrimidine nucleotides. The large subunit (synthetase) binds the substrates ammonia (free or transferred from glutamine from the small subunit), hydrogencarbonate and ATP and carries out an ATP-coupled ligase reaction, activating hydrogencarbonate by forming carboxy phosphate which reacts with ammonia to form carbamoyl phosphate. The sequence is that of Carbamoyl phosphate synthase large chain from Hyperthermus butylicus (strain DSM 5456 / JCM 9403 / PLM1-5).